Consider the following 197-residue polypeptide: MSKQVLKAELREQTGKGICRRLRAAGRVPAVVYGKGIAPVSISLGQKELSEAIAGEGGRNHILTLECAGELNGASVIVADLLRDSLKNVPRHVDLHKINLADKVKVHVKLNLVGTPAGVKAGGFLDFAMHEVEVECLPVHIPAHINVDVAELLIGHSVHVGQIVAPIGTAILSDPKASVVSILGRKGAAEEEAAPAA.

Belongs to the bacterial ribosomal protein bL25 family. CTC subfamily. As to quaternary structure, part of the 50S ribosomal subunit; part of the 5S rRNA/L5/L18/L25 subcomplex. Contacts the 5S rRNA. Binds to the 5S rRNA independently of L5 and L18.

This is one of the proteins that binds to the 5S RNA in the ribosome where it forms part of the central protuberance. The protein is Large ribosomal subunit protein bL25 of Citrifermentans bemidjiense (strain ATCC BAA-1014 / DSM 16622 / JCM 12645 / Bem) (Geobacter bemidjiensis).